The sequence spans 493 residues: Putative glycerol-3-phosphate transporter 5 (493 aa).

Helical transmembrane passes span F25 to H44, L83 to H103, F113 to W133, V145 to G165, S185 to W205, F207 to V227, F292 to L312, G328 to I348, I352 to M372, V375 to V395, A428 to I448, and G452 to V472.

It belongs to the major facilitator superfamily. Organophosphate:Pi antiporter (OPA) (TC 2.A.1.4) family.

The protein resides in the membrane. The sequence is that of Putative glycerol-3-phosphate transporter 5 from Arabidopsis thaliana (Mouse-ear cress).